The following is a 167-amino-acid chain: Protein MIX23 (167 aa).

Positions 81–108 are disordered; sequence QLDQDRNTSKSPLKSQQQLPSSSTTQVS. The segment covering 89–106 has biased composition (low complexity); sequence SKSPLKSQQQLPSSSTTQ.

This sequence belongs to the MIX23 family.

This chain is Protein MIX23 (cid2), found in Schizosaccharomyces pombe (strain 972 / ATCC 24843) (Fission yeast).